We begin with the raw amino-acid sequence, 90 residues long: U7-theraphotoxin-Hhn1j (90 aa).

Residues 1–19 form the signal peptide; the sequence is MKTAIFTVVLALAVFAVLS. A propeptide spanning residues 20 to 50 is cleaved from the precursor; it reads FGWEANEKALSEEFTELIHEKEAASETEARE. Disulfide bonds link C51/C65, C58/C70, and C64/C81.

It belongs to the neurotoxin 10 (Hwtx-1) family. 13 (Hntx-13) subfamily. As to expression, expressed by the venom gland.

Its subcellular location is the secreted. Its function is as follows. Ion channel inhibitor. The chain is U7-theraphotoxin-Hhn1j from Cyriopagopus hainanus (Chinese bird spider).